The following is a 310-amino-acid chain: MNILTDPTKLQGCTDTNANKCVEGDGEGSVQVQLDPDLKIGTAKVFSIYGKGGIGKSTTSSNLSVAFSKLGKRVLQIGCDPKHDSTFTLTKCLIPTVIDVLESVNFHAEELRPEDFVFEGYNGVMCLEAGGPPAGTGCGGYVVGQTVKLLKEHHLLEDTDVVIFDVLGDVVCGGFAAPLQHSDRAMIVTANDFDSIFAANRIVAAITAKAKNYGVRVGGIIANRSDATDQIDKFSERTGVPRVAHFPALDIIRKSRLKKSTLFELDHSPELAKVQEEYMRLATELWEGKQPPCEGKALKDREIFDLLGFD.

Residues 53–58 and Lys82 contribute to the ATP site; that span reads GIGKST. Ser57 contacts Mg(2+). [4Fe-4S] cluster is bound by residues Cys138 and Cys172. ATP-binding positions include 223–224 and 247–249; these read NR and PAL.

The protein belongs to the NifH/BchL/ChlL family. Homodimer. Protochlorophyllide reductase is composed of three subunits; BchL, BchN and BchB. [4Fe-4S] cluster is required as a cofactor.

It carries out the reaction chlorophyllide a + oxidized 2[4Fe-4S]-[ferredoxin] + 2 ADP + 2 phosphate = protochlorophyllide a + reduced 2[4Fe-4S]-[ferredoxin] + 2 ATP + 2 H2O. Its pathway is porphyrin-containing compound metabolism; bacteriochlorophyll biosynthesis (light-independent). Functionally, component of the dark-operative protochlorophyllide reductase (DPOR) that uses Mg-ATP and reduced ferredoxin to reduce ring D of protochlorophyllide (Pchlide) to form chlorophyllide a (Chlide). This reaction is light-independent. The L component serves as a unique electron donor to the NB-component of the complex, and binds Mg-ATP. The chain is Light-independent protochlorophyllide reductase iron-sulfur ATP-binding protein from Rhodopseudomonas palustris (strain BisA53).